A 557-amino-acid polypeptide reads, in one-letter code: CTP synthase (557 aa).

An amidoligase domain region spans residues 1-272 (MARSKIVKHI…DSLVLKKLML (272 aa)). Ser-18 is a binding site for CTP. Ser-18 serves as a coordination point for UTP. Residue 19–24 (SLGKGI) participates in ATP binding. Tyr-59 contributes to the L-glutamine binding site. Asp-76 serves as a coordination point for ATP. Positions 76 and 146 each coordinate Mg(2+). CTP-binding positions include 153-155 (DIE), 193-198 (KTKPTQ), and Lys-229. UTP-binding positions include 193 to 198 (KTKPTQ) and Lys-229. The Glutamine amidotransferase type-1 domain occupies 299–543 (EIGVCGKYTK…VAEAKKFRDE (245 aa)). Residue Gly-363 participates in L-glutamine binding. The active-site Nucleophile; for glutamine hydrolysis is the Cys-390. L-glutamine is bound by residues 391–394 (LGMQ), Glu-414, and Arg-471. Active-site residues include His-516 and Glu-518.

The protein belongs to the CTP synthase family. Homotetramer.

It carries out the reaction UTP + L-glutamine + ATP + H2O = CTP + L-glutamate + ADP + phosphate + 2 H(+). The enzyme catalyses L-glutamine + H2O = L-glutamate + NH4(+). The catalysed reaction is UTP + NH4(+) + ATP = CTP + ADP + phosphate + 2 H(+). It participates in pyrimidine metabolism; CTP biosynthesis via de novo pathway; CTP from UDP: step 2/2. Allosterically activated by GTP, when glutamine is the substrate; GTP has no effect on the reaction when ammonia is the substrate. The allosteric effector GTP functions by stabilizing the protein conformation that binds the tetrahedral intermediate(s) formed during glutamine hydrolysis. Inhibited by the product CTP, via allosteric rather than competitive inhibition. Catalyzes the ATP-dependent amination of UTP to CTP with either L-glutamine or ammonia as the source of nitrogen. Regulates intracellular CTP levels through interactions with the four ribonucleotide triphosphates. This chain is CTP synthase, found in Chloroherpeton thalassium (strain ATCC 35110 / GB-78).